A 180-amino-acid chain; its full sequence is ATP-dependent protease subunit HslV (180 aa).

The active site involves T5. Na(+)-binding residues include G165, C168, and T171.

The protein belongs to the peptidase T1B family. HslV subfamily. In terms of assembly, a double ring-shaped homohexamer of HslV is capped on each side by a ring-shaped HslU homohexamer. The assembly of the HslU/HslV complex is dependent on binding of ATP.

It is found in the cytoplasm. It catalyses the reaction ATP-dependent cleavage of peptide bonds with broad specificity.. Allosterically activated by HslU binding. Functionally, protease subunit of a proteasome-like degradation complex believed to be a general protein degrading machinery. The chain is ATP-dependent protease subunit HslV from Helicobacter acinonychis (strain Sheeba).